A 777-amino-acid chain; its full sequence is Intraflagellar transport protein 80 homolog (777 aa).

WD repeat units lie at residues 12–50 (KHQE…TSLI), 104–143 (AHCG…RSTL), 145–185 (QQGT…LQWK), 186–225 (AHDG…LYGS), 227–265 (PHEH…YALE), 267–306 (PNTG…WEWK), and 504–542 (KLGT…YVDR).

As to quaternary structure, component of the IFT complex B, at least composed of IFT20, IFT22, IFT25, IFT27, IFT46, IFT52, TRAF3IP1/IFT54, IFT57, IFT74, IFT80, IFT81, and IFT88. Interacts with IFT88. Interacts with IFT57 and IFT70B.

The protein localises to the cytoplasm. It localises to the cytoskeleton. Its subcellular location is the cilium basal body. The protein resides in the cilium axoneme. Functionally, component of the intraflagellar transport (IFT) complex B, which is essential for the development and maintenance of motile and sensory cilia. The sequence is that of Intraflagellar transport protein 80 homolog (Ift80) from Mus musculus (Mouse).